We begin with the raw amino-acid sequence, 305 residues long: Glycine betaine-binding protein YehZ (305 aa).

Positions 1–23 are cleaved as a signal peptide; the sequence is MPLLKLWAGSLVMLAAVSLPLQA.

This sequence belongs to the OsmX family. As to quaternary structure, the complex is composed of two ATP-binding proteins (YehX), two transmembrane proteins (YehW and YehY) and a solute-binding protein (YehZ).

Its subcellular location is the periplasm. In terms of biological role, part of an ABC transporter complex involved in low-affinity glycine betaine uptake. Binds glycine betaine with low affinity. This chain is Glycine betaine-binding protein YehZ (yehZ), found in Escherichia coli (strain K12).